Reading from the N-terminus, the 390-residue chain is Ureide permease 1 (390 aa).

Residues 1 to 9 (MYMIESKGG) lie on the Extracellular side of the membrane. Residues 10 to 30 (AIACMLLALLFLGTWPAIMTL) traverse the membrane as a helical segment. At 31-44 (TERRGRLPQHTYLD) the chain is on the cytoplasmic side. The chain crosses the membrane as a helical span at residues 45–65 (YTLTNLLAAVIIALTLGEIGP). At 66–78 (SRPNFFTQLSQDN) the chain is on the extracellular side. The helical transmembrane segment at 79 to 99 (WQSVMFAMAGGIVLSLGNLAT) threads the bilayer. At 100-101 (QY) the chain is on the cytoplasmic side. Residues 102-122 (AWAYVGLSVTEVITASITVVI) form a helical membrane-spanning segment. Residues 123–136 (GTTLNYFLDDRINR) lie on the Extracellular side of the membrane. The helical transmembrane segment at 137-157 (AEVLFPGVACFLIAVCFGSAV) threads the bilayer. The Cytoplasmic portion of the chain corresponds to 158–221 (HKSNAADNKT…RAIKVFGKST (64 aa)). 213–220 (AIKVFGKS) is an ATP binding site. Residues 222–242 (IIGLVITFFAGICFSLFSPAF) traverse the membrane as a helical segment. At 243–261 (NLATNDQWHTLKHGVPKLN) the chain is on the extracellular side. Residues 262–282 (VYTAFFYFSISAFVVALILNI) traverse the membrane as a helical segment. The Cytoplasmic portion of the chain corresponds to 283-307 (RFLYWPILGLPRSSFKAYLNDWNGR). The chain crosses the membrane as a helical span at residues 308–328 (GWSFLAGFLCGFGNGLQFMGG). Topologically, residues 329 to 333 (QAAGY) are extracellular. The helical transmembrane segment at 334 to 354 (AAADAVQALPLVSTFWGILLF) threads the bilayer. Residues 355 to 363 (GEYRRSSRK) are Cytoplasmic-facing. Residues 364-384 (TYTLLISMLLMFIVAVAVLMA) traverse the membrane as a helical segment. Residues 385-390 (SSGHRK) are Extracellular-facing.

It belongs to the plant ureide permease (TC 2.A.7.19) family. In terms of tissue distribution, expressed in leaves, flowers, roots and stems.

It is found in the membrane. Its function is as follows. Proton-coupled transporter that transports a wide spectrum of oxo derivatives of heterocyclic nitrogen compounds, including allantoin, uric acid and xanthine, but not adenine. Mediates high affinity transport of uracil and 5-fluorouracil (a toxic uracil analog). Mediates transport of free pyrimidines and may function during early seedling development in salvage pathways, by the utilization of pyrimidines from seed storage tissue. In Arabidopsis thaliana (Mouse-ear cress), this protein is Ureide permease 1.